The primary structure comprises 270 residues: Putative phosphoenolpyruvate synthase regulatory protein (270 aa).

150-157 (GVSRCGKT) contributes to the ADP binding site.

It belongs to the pyruvate, phosphate/water dikinase regulatory protein family. PSRP subfamily.

The enzyme catalyses [pyruvate, water dikinase] + ADP = [pyruvate, water dikinase]-phosphate + AMP + H(+). It carries out the reaction [pyruvate, water dikinase]-phosphate + phosphate + H(+) = [pyruvate, water dikinase] + diphosphate. Bifunctional serine/threonine kinase and phosphorylase involved in the regulation of the phosphoenolpyruvate synthase (PEPS) by catalyzing its phosphorylation/dephosphorylation. The sequence is that of Putative phosphoenolpyruvate synthase regulatory protein from Aeromonas salmonicida (strain A449).